The following is a 331-amino-acid chain: Meiotic recombination protein P22 (331 aa).

Residues 132 to 187 (NNIQKEVHQRNSQRRSIQCTPKKRGRKPKQPAKKLQSRISTDQLGSTPSPSKLPAK) are disordered. Basic residues predominate over residues 152-167 (PKKRGRKPKQPAKKLQ). The segment covering 168-181 (SRISTDQLGSTPSP) has biased composition (polar residues).

The protein belongs to the TOP6B-like family.

The protein resides in the chromosome. Its function is as follows. Required for formation of the mei-W68-mediated double-strand breaks (DSBs) that initiate meiotic recombination. The sequence is that of Meiotic recombination protein P22 from Drosophila melanogaster (Fruit fly).